Reading from the N-terminus, the 163-residue chain is Crossover junction endodeoxyribonuclease RuvC (163 aa).

Residues aspartate 7, glutamate 66, and aspartate 139 contribute to the active site. Mg(2+) is bound by residues aspartate 7, glutamate 66, and aspartate 139.

This sequence belongs to the RuvC family. As to quaternary structure, homodimer which binds Holliday junction (HJ) DNA. The HJ becomes 2-fold symmetrical on binding to RuvC with unstacked arms; it has a different conformation from HJ DNA in complex with RuvA. In the full resolvosome a probable DNA-RuvA(4)-RuvB(12)-RuvC(2) complex forms which resolves the HJ. Requires Mg(2+) as cofactor.

The protein localises to the cytoplasm. The catalysed reaction is Endonucleolytic cleavage at a junction such as a reciprocal single-stranded crossover between two homologous DNA duplexes (Holliday junction).. In terms of biological role, the RuvA-RuvB-RuvC complex processes Holliday junction (HJ) DNA during genetic recombination and DNA repair. Endonuclease that resolves HJ intermediates. Cleaves cruciform DNA by making single-stranded nicks across the HJ at symmetrical positions within the homologous arms, yielding a 5'-phosphate and a 3'-hydroxyl group; requires a central core of homology in the junction. The consensus cleavage sequence is 5'-(A/T)TT(C/G)-3'. Cleavage occurs on the 3'-side of the TT dinucleotide at the point of strand exchange. HJ branch migration catalyzed by RuvA-RuvB allows RuvC to scan DNA until it finds its consensus sequence, where it cleaves and resolves the cruciform DNA. The polypeptide is Crossover junction endodeoxyribonuclease RuvC (Thermomicrobium roseum (strain ATCC 27502 / DSM 5159 / P-2)).